We begin with the raw amino-acid sequence, 257 residues long: Type III pantothenate kinase (257 aa).

24-31 contacts ATP; sequence MIGNSRLH. Residues Y96 and 100 to 103 each bind substrate; that span reads GIDR. D102 acts as the Proton acceptor in catalysis. D122 lines the K(+) pocket. Residue T125 participates in ATP binding. T180 serves as a coordination point for substrate.

It belongs to the type III pantothenate kinase family. As to quaternary structure, homodimer. Requires NH4(+) as cofactor. K(+) serves as cofactor.

The protein localises to the cytoplasm. The catalysed reaction is (R)-pantothenate + ATP = (R)-4'-phosphopantothenate + ADP + H(+). It functions in the pathway cofactor biosynthesis; coenzyme A biosynthesis; CoA from (R)-pantothenate: step 1/5. Functionally, catalyzes the phosphorylation of pantothenate (Pan), the first step in CoA biosynthesis. This chain is Type III pantothenate kinase, found in Synechocystis sp. (strain ATCC 27184 / PCC 6803 / Kazusa).